The following is a 335-amino-acid chain: Nod factor export ATP-binding protein I (335 aa).

The segment covering 1 to 10 (MTQEVPRRLE) has biased composition (basic and acidic residues). Residues 1 to 22 (MTQEVPRRLEPSPFEWKGDAGP) are disordered. Residues 37–267 (IDLASVTKSY…KIGCQVIEIY (231 aa)) enclose the ABC transporter domain. 69 to 76 (GPNGAGKS) contacts ATP.

It belongs to the ABC transporter superfamily. Lipooligosaccharide exporter (TC 3.A.1.102) family. As to quaternary structure, the complex is composed of two ATP-binding proteins (NodI) and two transmembrane proteins (NodJ).

It localises to the cell inner membrane. In terms of biological role, part of the ABC transporter complex NodIJ involved in the export of the nodulation factors (Nod factors), the bacterial signal molecules that induce symbiosis and subsequent nodulation induction. Nod factors are LCO (lipo-chitin oligosaccharide), a modified beta-1,4-linked N-acetylglucosamine oligosaccharide. This subunit is responsible for energy coupling to the transport system. This chain is Nod factor export ATP-binding protein I, found in Rhizobium meliloti (Ensifer meliloti).